The following is a 359-amino-acid chain: Prostaglandin F2-alpha receptor (359 aa).

Over 1-31 (MSMNNSKQLVSPAAALLSNTTCQTENRLSVF) the chain is Extracellular. N-linked (GlcNAc...) asparagine glycans are attached at residues Asn-4 and Asn-19. A helical membrane pass occupies residues 32–54 (FSVIFMTVGILSNSLAIAILMKA). Over 55-69 (YQRFRQKSKASFLLL) the chain is Cytoplasmic. Residues 70–90 (ASGLVITDFFGHLINGAIAVF) traverse the membrane as a helical segment. The Extracellular portion of the chain corresponds to 91 to 109 (VYASDKEWIRFDQSNVLCS). A disulfide bridge connects residues Cys-108 and Cys-186. A helical transmembrane segment spans residues 110–131 (IFGICMVFSGLCPLLLGSVMAI). Residues 132 to 152 (ERCIGVTKPIFHSTKITSKHV) lie on the Cytoplasmic side of the membrane. Residues 153 to 175 (KMMLSGVCLFAVFIALLPILGHR) form a helical membrane-spanning segment. Over 176–198 (DYKIQASRTWCFYNTEDIKDWED) the chain is Extracellular. The helical transmembrane segment at 199 to 224 (RFYLLLFSFLGLLALGVSLLCNAITG) threads the bilayer. Over 225 to 250 (ITLLRVKFKSQQHRQGRSHHLEMVIQ) the chain is Cytoplasmic. Residues 251 to 267 (LLAIMCVSCICWSPFLV) traverse the membrane as a helical segment. At 268–285 (TMANIGINGNHSLETCET) the chain is on the extracellular side. The helical transmembrane segment at 286 to 307 (TLFALRMATWNQILDPWVYILL) threads the bilayer. Residues 308-359 (RKAVLKNLYKLASQCCGVHVISLHIWELSSIKNSLKVAAISESPVAEKSAST) lie on the Cytoplasmic side of the membrane.

It belongs to the G-protein coupled receptor 1 family. In terms of assembly, isoform 1 can form heterodimers with isoform 5 (and probably other isoforms). Eye.

It localises to the cell membrane. Its function is as follows. Receptor for prostaglandin F2-alpha (PGF2-alpha). The activity of this receptor is mediated by G proteins which activate a phosphatidylinositol-calcium second messenger system. Initiates luteolysis in the corpus luteum. Isoforms 2 to 7 do not bind PGF2-alpha but are proposed to modulate signaling by participating in variant receptor complexes; heterodimers between isoform 1 and isoform 5 are proposed to be a receptor for prostamides including the synthetic analog bimatoprost. The polypeptide is Prostaglandin F2-alpha receptor (PTGFR) (Homo sapiens (Human)).